Reading from the N-terminus, the 156-residue chain is MPRRRVAAKREILPDPKFGSKKLAKFINHVMESGKKSVAERIVYGALDIVSNKAKKEPIETFELALENIQPLVEVKSRRVGGATYQVPVEVRPSRQMALSMRWLVEYSRKRGEKSMAARLAAEMLEAAEGRGAAVKKREDVHRMAEANKAFSHYRF.

This sequence belongs to the universal ribosomal protein uS7 family. As to quaternary structure, part of the 30S ribosomal subunit. Contacts proteins S9 and S11.

In terms of biological role, one of the primary rRNA binding proteins, it binds directly to 16S rRNA where it nucleates assembly of the head domain of the 30S subunit. Is located at the subunit interface close to the decoding center, probably blocks exit of the E-site tRNA. This Hahella chejuensis (strain KCTC 2396) protein is Small ribosomal subunit protein uS7.